The chain runs to 248 residues: Inhibitor of growth protein 4 (248 aa).

A coiled-coil region spans residues Phe-25–Ser-118. Residues Lys-112, Lys-127, and Lys-129 each carry the N6-acetyllysine modification. The disordered stretch occupies residues Gln-115–Lys-160. The short motif at Lys-127–Lys-147 is the Bipartite nuclear localization signal element. A Citrulline modification is found at Arg-132. 3 positions are modified to N6-acetyllysine: Lys-145, Lys-147, and Lys-155. Arg-165 is subject to Citrulline. Residues Pro-195 to Glu-244 form a PHD-type zinc finger. Zn(2+) contacts are provided by Cys-198, Cys-200, Cys-211, Cys-216, His-222, Cys-225, Cys-238, and Cys-241.

It belongs to the ING family. As to quaternary structure, homodimer. Component of the HBO1 complex composed of KAT7/HBO1, MEAF6, ING4 or ING5, and one scaffold subunit: complexes containing BRPF scaffold (BRPF1, BRD1/BRPF2 or BRPF3) direct KAT7/HBO1 specificity towards H3K14ac, while complexes containing JADE scaffold (JADE1, JADE2 and JADE3) mediate acetylation of histone H4. Interacts with H3K4me3 and to a lesser extent with H3K4me2, the interaction augments KAT7/HBO1 acetylation activity on H3 tails. Interacts with EP300, RELA and TP53; these interactions may be indirect. Interacts with EGLN1. Interacts with BCL2A1. Citrullination by PADI4 within the nuclear localization signal disrupts the interaction with p53 and increases susceptibility to degradation.

Its subcellular location is the nucleus. Functionally, component of HBO1 complexes, which specifically mediate acetylation of histone H3 at 'Lys-14' (H3K14ac), and have reduced activity toward histone H4. Through chromatin acetylation it may function in DNA replication. May inhibit tumor progression by modulating the transcriptional output of signaling pathways which regulate cell proliferation. Can suppress brain tumor angiogenesis through transcriptional repression of RELA/NFKB3 target genes when complexed with RELA. May also specifically suppress loss of contact inhibition elicited by activated oncogenes such as MYC. Represses hypoxia inducible factor's (HIF) activity by interacting with HIF prolyl hydroxylase 2 (EGLN1). Can enhance apoptosis induced by serum starvation in mammary epithelial cell line HC11. This is Inhibitor of growth protein 4 (ING4) from Bos taurus (Bovine).